A 423-amino-acid chain; its full sequence is Calcium up-regulated protein A (423 aa).

The segment covering 1–19 (MINIEDISKSSNESEEKQL) has biased composition (basic and acidic residues). The interval 1–27 (MINIEDISKSSNESEEKQLKSTSTSSK) is disordered. Ricin B-type lectin domains follow at residues 27 to 147 (KPKY…WTTF) and 118 to 251 (QGNG…WGIN).

This sequence belongs to the cup family.

Its subcellular location is the cytoplasm. The protein localises to the membrane. In terms of biological role, may play an important role in stabilizing and/or regulating the cell membrane during Ca(2+) stress or certain stages of development. In Dictyostelium discoideum (Social amoeba), this protein is Calcium up-regulated protein A (cupA).